The chain runs to 128 residues: Probable prefoldin subunit 6 (128 aa).

Belongs to the prefoldin subunit beta family. Heterohexamer of two PFD-alpha type and four PFD-beta type subunits.

The protein localises to the cytoplasm. Its function is as follows. Binds specifically to cytosolic chaperonin (c-CPN) and transfers target proteins to it. Binds to nascent polypeptide chain and promotes folding in an environment in which there are many competing pathways for nonnative proteins. Required for positioning of the mitotic spindle. This Caenorhabditis briggsae protein is Probable prefoldin subunit 6.